The following is a 254-amino-acid chain: Undecaprenyl-diphosphatase (254 aa).

The next 8 helical transmembrane spans lie at 1-21 (MDII…FLPI), 41-61 (LTKA…MLIY), 70-90 (IDLW…GFIF), 97-117 (LFNV…FLIV), 134-154 (VSWT…IPGT), 175-195 (AEFS…YDLL), 209-229 (FLIG…LFLV), and 234-254 (FTFV…LMIL).

It belongs to the UppP family.

Its subcellular location is the cell inner membrane. It catalyses the reaction di-trans,octa-cis-undecaprenyl diphosphate + H2O = di-trans,octa-cis-undecaprenyl phosphate + phosphate + H(+). Its function is as follows. Catalyzes the dephosphorylation of undecaprenyl diphosphate (UPP). Confers resistance to bacitracin. This is Undecaprenyl-diphosphatase from Sulfurovum sp. (strain NBC37-1).